Reading from the N-terminus, the 200-residue chain is Recombination protein RecR (200 aa).

The C4-type zinc-finger motif lies at 57–72 (CRQCRTLTEQELCPQC). One can recognise a Toprim domain in the interval 80–175 (TQLCVVEGPV…TATRIAHGVP (96 aa)).

Belongs to the RecR family.

In terms of biological role, may play a role in DNA repair. It seems to be involved in an RecBC-independent recombinational process of DNA repair. It may act with RecF and RecO. This is Recombination protein RecR from Pseudomonas entomophila (strain L48).